The sequence spans 274 residues: Large ribosomal subunit protein uL2 (274 aa).

Residues 224-256 (VMNPVDHPHGGGEGKTGEGRHPVDPWGNLTKGY) are disordered. Residues 229 to 246 (DHPHGGGEGKTGEGRHPV) are compositionally biased toward basic and acidic residues.

Belongs to the universal ribosomal protein uL2 family. As to quaternary structure, part of the 50S ribosomal subunit. Forms a bridge to the 30S subunit in the 70S ribosome.

Functionally, one of the primary rRNA binding proteins. Required for association of the 30S and 50S subunits to form the 70S ribosome, for tRNA binding and peptide bond formation. It has been suggested to have peptidyltransferase activity; this is somewhat controversial. Makes several contacts with the 16S rRNA in the 70S ribosome. This chain is Large ribosomal subunit protein uL2, found in Polaromonas sp. (strain JS666 / ATCC BAA-500).